The primary structure comprises 325 residues: Mitochondrial citrate transporter C (325 aa).

3 Solcar repeats span residues 15–105 (ASPA…YKQM), 117–208 (KATF…LKAF), and 221–310 (LPSY…LKGK). 6 helical membrane passes run 21–41 (LIAGGGAGMMEALVCHPLDTI), 82–102 (GAVLGGIIPKMAIRFTSYESY), 121–141 (LAGLAAGVTEAVAVVNPMEVV), 187–207 (TALRQGTNQAANFTAYTELKA), 221–241 (LPSYQTTFIGLISGAVGPFSN), and 282–303 (FYKGITPRVMRVAPGQAVTFTV).

It belongs to the mitochondrial carrier (TC 2.A.29) family.

Its subcellular location is the mitochondrion inner membrane. Functionally, mitochondrial transporter that does not mediate citrate export from mitochondria to cytoplasm. Its exact function has still to be determined. The polypeptide is Mitochondrial citrate transporter C (Aspergillus niger (strain ATCC 1015 / CBS 113.46 / FGSC A1144 / LSHB Ac4 / NCTC 3858a / NRRL 328 / USDA 3528.7)).